A 565-amino-acid polypeptide reads, in one-letter code: Proline--tRNA ligase (565 aa).

It belongs to the class-II aminoacyl-tRNA synthetase family. ProS type 1 subfamily. In terms of assembly, homodimer.

It is found in the cytoplasm. It catalyses the reaction tRNA(Pro) + L-proline + ATP = L-prolyl-tRNA(Pro) + AMP + diphosphate. Catalyzes the attachment of proline to tRNA(Pro) in a two-step reaction: proline is first activated by ATP to form Pro-AMP and then transferred to the acceptor end of tRNA(Pro). As ProRS can inadvertently accommodate and process non-cognate amino acids such as alanine and cysteine, to avoid such errors it has two additional distinct editing activities against alanine. One activity is designated as 'pretransfer' editing and involves the tRNA(Pro)-independent hydrolysis of activated Ala-AMP. The other activity is designated 'posttransfer' editing and involves deacylation of mischarged Ala-tRNA(Pro). The misacylated Cys-tRNA(Pro) is not edited by ProRS. In Lactobacillus gasseri (strain ATCC 33323 / DSM 20243 / BCRC 14619 / CIP 102991 / JCM 1131 / KCTC 3163 / NCIMB 11718 / NCTC 13722 / AM63), this protein is Proline--tRNA ligase.